The sequence spans 278 residues: Energy-coupling factor transporter ATP-binding protein EcfA1 (278 aa).

The 236-residue stretch at 5–240 (IEVRNLKYKY…EDLEELGLDQ (236 aa)) folds into the ABC transporter domain. ATP is bound at residue 40-47 (GHNGSGKS).

This sequence belongs to the ABC transporter superfamily. Energy-coupling factor EcfA family. Forms a stable energy-coupling factor (ECF) transporter complex composed of 2 membrane-embedded substrate-binding proteins (S component), 2 ATP-binding proteins (A component) and 2 transmembrane proteins (T component).

Its subcellular location is the cell membrane. ATP-binding (A) component of a common energy-coupling factor (ECF) ABC-transporter complex. Unlike classic ABC transporters this ECF transporter provides the energy necessary to transport a number of different substrates. The polypeptide is Energy-coupling factor transporter ATP-binding protein EcfA1 (Streptococcus sanguinis (strain SK36)).